Consider the following 431-residue polypeptide: Glutamate-1-semialdehyde 2,1-aminomutase (431 aa).

At K265 the chain carries N6-(pyridoxal phosphate)lysine.

This sequence belongs to the class-III pyridoxal-phosphate-dependent aminotransferase family. HemL subfamily. Homodimer. Pyridoxal 5'-phosphate serves as cofactor.

It is found in the cytoplasm. It catalyses the reaction (S)-4-amino-5-oxopentanoate = 5-aminolevulinate. It functions in the pathway porphyrin-containing compound metabolism; protoporphyrin-IX biosynthesis; 5-aminolevulinate from L-glutamyl-tRNA(Glu): step 2/2. This is Glutamate-1-semialdehyde 2,1-aminomutase from Aliivibrio salmonicida (strain LFI1238) (Vibrio salmonicida (strain LFI1238)).